Reading from the N-terminus, the 236-residue chain is MKNKNRLNTIKLLSISLLIAVTTACSNTVELSKALPNDPDFAPIMPEEEEERIVPSGSLFKPHYVNNIYSDSKAHRVGDIISVILSEKTQAKKNAKTELKKANETNLDAVTGLGGVPVSINGESLQFGISQDSNFKGDAKADQGNSLSGNISVHVLRVLPNGNLMIRGEKWLTLNNGDEYIRLTGVIRSKDINSNNTILSNKVANARIQYAGTGSFADSNEQGWLVKFFNSTWWPF.

The first 24 residues, 1–24 (MKNKNRLNTIKLLSISLLIAVTTA), serve as a signal peptide directing secretion. The N-palmitoyl cysteine moiety is linked to residue C25. Residue C25 is the site of S-diacylglycerol cysteine attachment.

Belongs to the FlgH family. As to quaternary structure, the basal body constitutes a major portion of the flagellar organelle and consists of four rings (L,P,S, and M) mounted on a central rod.

The protein resides in the cell outer membrane. Its subcellular location is the bacterial flagellum basal body. In terms of biological role, assembles around the rod to form the L-ring and probably protects the motor/basal body from shearing forces during rotation. This is Flagellar L-ring protein from Colwellia psychrerythraea (strain 34H / ATCC BAA-681) (Vibrio psychroerythus).